The primary structure comprises 269 residues: tRNA uridine(34) hydroxylase (269 aa).

One can recognise a Rhodanese domain in the interval 122–216 (QDPEVVLIDV…YLEAIAPEEN (95 aa)). Cysteine 176 acts as the Cysteine persulfide intermediate in catalysis.

This sequence belongs to the TrhO family.

The enzyme catalyses uridine(34) in tRNA + AH2 + O2 = 5-hydroxyuridine(34) in tRNA + A + H2O. Its function is as follows. Catalyzes oxygen-dependent 5-hydroxyuridine (ho5U) modification at position 34 in tRNAs. In Synechococcus elongatus (strain ATCC 33912 / PCC 7942 / FACHB-805) (Anacystis nidulans R2), this protein is tRNA uridine(34) hydroxylase.